The sequence spans 590 residues: Synaptotagmin-3 (590 aa).

Over 1 to 54 the chain is Vesicular; it reads MSGDYEDDLCRRALILVSDLCARVRDADTNDRCQEFNDRIRGYPRGPDADISVS. The segment at 10-34 is cysteine motif; that stretch reads CRRALILVSDLCARVRDADTNDRCQ. Residues 55 to 75 form a helical membrane-spanning segment; the sequence is LLSVIVTFCGIVLLGVSLFVS. Residues 76–590 are Cytoplasmic-facing; sequence WKLCWVPWRD…KGLSEKENSE (515 aa). 3 disordered regions span residues 143–220, 234–260, and 273–295; these read AELL…VTSL, TQQTLTSQPDPSSEERPPALPLPLPGG, and ELYQGTGPGGRRSGGGPGSGEAG. Positions 185–203 are enriched in low complexity; that stretch reads SPELPSEGGAGSGLLLLPP. A compositionally biased stretch (polar residues) spans 234 to 243; that stretch reads TQQTLTSQPD. Residues 278 to 295 show a composition bias toward gly residues; it reads TGPGGRRSGGGPGSGEAG. Residue arginine 284 is modified to Omega-N-methylarginine. C2 domains follow at residues 299–420 and 431–565; these read PCGR…PLWR and DLGE…EHWH. 11 residues coordinate Ca(2+): aspartate 330, aspartate 336, aspartate 388, phenylalanine 389, aspartate 390, serine 393, aspartate 396, aspartate 462, aspartate 468, aspartate 522, and aspartate 524.

This sequence belongs to the synaptotagmin family. Homodimer; disulfide-linked via the cysteine motif. Can also form heterodimers with SYT6, SYT9 and SYT10. The cofactor is Ca(2+). In terms of tissue distribution, expressed in melanocytes.

The protein resides in the cell membrane. It localises to the cytoplasmic vesicle. Its subcellular location is the secretory vesicle membrane. Ca(2+) sensor involved in Ca(2+)-dependent exocytosis of secretory vesicles through Ca(2+) and phospholipid binding to the C2 domain. Ca(2+) induces binding of the C2-domains to phospholipid membranes and to assembled SNARE-complexes; both actions contribute to triggering exocytosis. Plays a role in dendrite formation by melanocytes. The protein is Synaptotagmin-3 (SYT3) of Homo sapiens (Human).